Consider the following 448-residue polypeptide: Cysteine--tRNA ligase (448 aa).

Residue cysteine 27 participates in Zn(2+) binding. Residues 29–39 (PTVYNYIHVGN) carry the 'HIGH' region motif. Residues cysteine 210, histidine 235, and glutamate 239 each coordinate Zn(2+). Positions 267–271 (KMSKS) match the 'KMSKS' region motif. Residue lysine 270 participates in ATP binding.

The protein belongs to the class-I aminoacyl-tRNA synthetase family. Monomer. Zn(2+) is required as a cofactor.

The protein localises to the cytoplasm. It catalyses the reaction tRNA(Cys) + L-cysteine + ATP = L-cysteinyl-tRNA(Cys) + AMP + diphosphate. The protein is Cysteine--tRNA ligase of Lactococcus lactis subsp. cremoris (strain SK11).